The sequence spans 314 residues: 2,3-dihydroxyphenylpropionate/2,3-dihydroxicinnamic acid 1,2-dioxygenase (314 aa).

The active-site Proton donor is His-115. The Proton acceptor role is filled by His-179.

This sequence belongs to the LigB/MhpB extradiol dioxygenase family. As to quaternary structure, homotetramer. Requires Fe(2+) as cofactor.

It carries out the reaction 3-(2,3-dihydroxyphenyl)propanoate + O2 = (2Z,4E)-2-hydroxy-6-oxonona-2,4-dienedioate + H(+). It catalyses the reaction (2E)-3-(2,3-dihydroxyphenyl)prop-2-enoate + O2 = (2Z,4E,7E)-2-hydroxy-6-oxonona-2,4,7-trienedioate + H(+). It functions in the pathway aromatic compound metabolism; 3-phenylpropanoate degradation. In terms of biological role, catalyzes the non-heme iron(II)-dependent oxidative cleavage of 2,3-dihydroxyphenylpropionic acid and 2,3-dihydroxicinnamic acid into 2-hydroxy-6-ketononadienedioate and 2-hydroxy-6-ketononatrienedioate, respectively. This Escherichia coli O81 (strain ED1a) protein is 2,3-dihydroxyphenylpropionate/2,3-dihydroxicinnamic acid 1,2-dioxygenase.